A 118-amino-acid polypeptide reads, in one-letter code: MRSAKLKFEKRKSRIRYKISKTSNRMRLSIFKSCRHIYAQIIDDSKSITIAAASTLDKKIKKIKKSHCNIENAIKVGKEIAKKADSAGIKEVVFDRGGYKYHGIIKALADAAREKIKF.

It belongs to the universal ribosomal protein uL18 family. In terms of assembly, part of the 50S ribosomal subunit; part of the 5S rRNA/L5/L18/L25 subcomplex. Contacts the 5S and 23S rRNAs.

Its function is as follows. This is one of the proteins that bind and probably mediate the attachment of the 5S RNA into the large ribosomal subunit, where it forms part of the central protuberance. This Rickettsia prowazekii (strain Madrid E) protein is Large ribosomal subunit protein uL18.